The sequence spans 147 residues: Hemoglobin subunit beta (147 aa).

Residues 3–147 enclose the Globin domain; the sequence is LLSAEENAHV…VANALAHKYH (145 aa). Position 13 is a phosphothreonine (T13). Phosphoserine is present on S45. Position 60 is an N6-acetyllysine (K60). H64 is a heme b binding site. K83 is modified (N6-acetyllysine). H93 is a heme b binding site. C94 is subject to S-nitrosocysteine. K145 carries the N6-acetyllysine modification.

The protein belongs to the globin family. In terms of assembly, heterotetramer of two alpha chains and two beta chains. Red blood cells.

In terms of biological role, involved in oxygen transport from the lung to the various peripheral tissues. In Eulemur fulvus fulvus (Brown lemur), this protein is Hemoglobin subunit beta (HBB).